The following is a 528-amino-acid chain: GMP synthase [glutamine-hydrolyzing] (528 aa).

The region spanning 13–204 is the Glutamine amidotransferase type-1 domain; sequence AIVILDFGSQ…VYHICGCEPD (192 aa). C90 serves as the catalytic Nucleophile. Active-site residues include H178 and E180. One can recognise a GMPS ATP-PPase domain in the interval 205 to 403; sequence WTTSAFIDEA…LGLPEEIVRR (199 aa). 232–238 is an ATP binding site; that stretch reads SGGVDSS.

In terms of assembly, homodimer.

It carries out the reaction XMP + L-glutamine + ATP + H2O = GMP + L-glutamate + AMP + diphosphate + 2 H(+). The protein operates within purine metabolism; GMP biosynthesis; GMP from XMP (L-Gln route): step 1/1. Its function is as follows. Catalyzes the synthesis of GMP from XMP. The chain is GMP synthase [glutamine-hydrolyzing] from Parasynechococcus marenigrum (strain WH8102).